A 395-amino-acid chain; its full sequence is MGIKHLYQVIAENAPDAIKAGDIKNHFGRKVAIDASMSIYSFLIAVRSEGQQLMSDTGETTSHLMGMFYRTLRMVDNGIKPLYVFDGAPPKLKSGELAKRTARKAEATEAHEEAKETGTAEDVEKFSRRTVRVTRDHNAECKKLLKLMGIPYIDAPTEAEAQCAVLARAGKVYAAASEDMDTLCFEAPILLRHLTFSEQRKEPILEIHLSRALEGLDMDRKQFIDLCILLGCDYLEPIPKVGPNTALKLIREFGSLEKVVEHMESDPKKKYVIPEDWPYQDARELFLNPDVREASHPDCDFKWEAPDIEGLVEFLVKDKGFNEDRVRNGAARLQKNLKTAQQSRLEGFFKPVARTDEEKANLKRKHDEKLQEQKKRKKEEAKAKKEAKARPRGAG.

The N-domain stretch occupies residues 1–104; the sequence is MGIKHLYQVI…GELAKRTARK (104 aa). Mg(2+) is bound at residue aspartate 34. DNA is bound by residues arginine 47 and arginine 70. Mg(2+) is bound at residue aspartate 86. Residues 102–121 form a disordered region; the sequence is ARKAEATEAHEEAKETGTAE. An I-domain region spans residues 122–253; it reads DVEKFSRRTV…NTALKLIREF (132 aa). Mg(2+) is bound by residues glutamate 158, glutamate 160, aspartate 179, and aspartate 181. Glutamate 158 contributes to the DNA binding site. Positions 231 and 233 each coordinate DNA. Aspartate 233 contacts Mg(2+). Residues 341-349 form an interaction with PCNA region; that stretch reads QQSRLEGFF. The disordered stretch occupies residues 348-395; sequence FFKPVARTDEEKANLKRKHDEKLQEQKKRKKEEAKAKKEAKARPRGAG. Residues 353–389 are compositionally biased toward basic and acidic residues; the sequence is ARTDEEKANLKRKHDEKLQEQKKRKKEEAKAKKEAKA.

This sequence belongs to the XPG/RAD2 endonuclease family. FEN1 subfamily. In terms of assembly, interacts with PCNA. Three molecules of fen1 bind to one PCNA trimer with each molecule binding to one PCNA monomer. PCNA stimulates the nuclease activity without altering cleavage specificity. Requires Mg(2+) as cofactor. In terms of processing, phosphorylated. Phosphorylation upon DNA damage induces relocalization to the nuclear plasma.

It localises to the nucleus. The protein resides in the nucleolus. The protein localises to the nucleoplasm. Its subcellular location is the mitochondrion. Functionally, structure-specific nuclease with 5'-flap endonuclease and 5'-3' exonuclease activities involved in DNA replication and repair. During DNA replication, cleaves the 5'-overhanging flap structure that is generated by displacement synthesis when DNA polymerase encounters the 5'-end of a downstream Okazaki fragment. It enters the flap from the 5'-end and then tracks to cleave the flap base, leaving a nick for ligation. Also involved in the long patch base excision repair (LP-BER) pathway, by cleaving within the apurinic/apyrimidinic (AP) site-terminated flap. Acts as a genome stabilization factor that prevents flaps from equilibrating into structures that lead to duplications and deletions. Also possesses 5'-3' exonuclease activity on nicked or gapped double-stranded DNA, and exhibits RNase H activity. Also involved in replication and repair of rDNA and in repairing mitochondrial DNA. The polypeptide is Flap endonuclease 1 (fen1) (Aspergillus flavus (strain ATCC 200026 / FGSC A1120 / IAM 13836 / NRRL 3357 / JCM 12722 / SRRC 167)).